Consider the following 744-residue polypeptide: Prestin (744 aa).

The Cytoplasmic segment spans residues 1–75 (MDHAEENEIP…PITKWLPAYK (75 aa)). Residues 76 to 104 (FKEYVLGDLVSGISTGVLQLPQGLAFAML) traverse the membrane as a helical segment. The Extracellular segment spans residues 105–108 (AAVP). The helical transmembrane segment at 109–126 (PVFGLYSSFYPVIMYCFF) threads the bilayer. Over 127–137 (GTSRHISIGPF) the chain is Cytoplasmic. Residues 138–149 (AVISLMIGGVAV) form a helical membrane-spanning segment. The Extracellular portion of the chain corresponds to 150–168 (RLVPDDIVIPGGVNATNGT). Positions 158 to 168 (IPGGVNATNGT) match the Involved in motor function motif. N-linked (GlcNAc...) asparagine glycans are attached at residues Asn-163 and Asn-166. A helical transmembrane segment spans residues 169–196 (EARDALRVKVAMSVTLLSGIIQFCLGVC). The Cytoplasmic portion of the chain corresponds to 197 to 206 (RFGFVAIYLT). A helical transmembrane segment spans residues 207–230 (EPLVRGFTTAAAVHVFTSMLKYLF). Topologically, residues 231 to 241 (GVKTKRYSGIF) are extracellular. Positions 242–253 (SVVYSTVAVLQN) form an intramembrane region, helical. The Extracellular segment spans residues 254 to 258 (VKNLN). The helical transmembrane segment at 259 to 276 (VCSLGVGLMVFGLLLGGK) threads the bilayer. Residues 277-291 (EFNERFKEKLPAPIP) are Cytoplasmic-facing. The helical transmembrane segment at 292-307 (LEFFAVVMGTGISAGF) threads the bilayer. Residues 308 to 332 (NLHESYSVDVVGTLPLGLLPPANPD) are Extracellular-facing. The chain crosses the membrane as a helical span at residues 333–359 (TSLFHLVYVDAIAIAIVGFSVTISMAK). The Cytoplasmic portion of the chain corresponds to 360–370 (TLANKHGYQVD). The helical transmembrane segment at 371–388 (GNQELIALGICNSIGSLF) threads the bilayer. Over 389–396 (QTFSISCS) the chain is Extracellular. The chain crosses the membrane as a helical span at residues 397–406 (LSRSLVQEGT). Ser-398 serves as a coordination point for salicylate. Residues 407-410 (GGKT) are Cytoplasmic-facing. Residues 411 to 431 (QLAGCLASLMILLVILATGFL) form a helical membrane-spanning segment. At 432 to 436 (FESLP) the chain is on the extracellular side. Residues 437–464 (QAVLSAIVIVNLKGMFMQFSDLPFFWRT) traverse the membrane as a helical segment. A topological domain (cytoplasmic) is located at residue Ser-465. Residues 466 to 481 (KIELTIWLTTFVSSLF) traverse the membrane as a helical segment. The Extracellular portion of the chain corresponds to 482 to 484 (LGL). Residues 485-504 (DYGLITAVIIALLTVIYRTQ) form a helical membrane-spanning segment. Residues 505–718 (SPSYTVLGQL…AVLGSQVREA (214 aa)) are extended region for STAS domain. At 505-744 (SPSYTVLGQL…PNATPTTPEA (240 aa)) the chain is on the cytoplasmic side. An STAS domain is found at 525–713 (AYEEVKEIPG…HSIHDAVLGS (189 aa)). A disordered region spans residues 720 to 744 (AEQETTVLPPQEDMEPNATPTTPEA).

This sequence belongs to the SLC26A/SulP transporter (TC 2.A.53) family. As to quaternary structure, homodimer. Interacts (via STAS domain) with CALM; this interaction is calcium-dependent and the STAS domain interacts with only one lobe of CALM which is an elongated conformation. Interacts with MYH1. As to expression, specifically expressed in outer hair cells of cochleae (at protein level). Not detected in other cells of the organ of Corti.

The protein resides in the lateral cell membrane. The catalysed reaction is 2 hydrogencarbonate(in) + chloride(out) = 2 hydrogencarbonate(out) + chloride(in). Salicylate, an inhibitor of outer hair cell motility, acts as a competitive antagonist at the prestin anion-binding site. In terms of biological role, voltage-sensitive motor protein that drives outer hair cell (OHC) electromotility (eM) and participates in sound amplification in the hearing organ. Converts changes in the transmembrane electric potential into mechanical displacements resulting in the coupling of its expansion to movement of a charged voltage sensor across the lipid membrane. The nature of the voltage sensor is not completely clear, and two models compete. In the first model, acts as an incomplete transporter where intracellular chloride anion acts as extrinsic voltage sensor that drives conformational change in the protein which is sufficient to produce a length change in the plane of the membrane and hence in the length of the OHC. The second model in which multiple charged amino acid residues are distributed at the intracellular and extracellular membrane interfaces that form an intrinsic voltage sensor, whose movement produces the non-linear capacitance (NLC). However, the effective voltage sensor may be the result of a hybrid voltage sensor assembled from intrinsic charge (charged residues) and extrinsic charge (bound anion). Notably, binding of anions to the anion-binding pocket partially neutralizes the intrinsic positive charge rather than to form an electrically negative sensor, therefore remaining charge may serve as voltage sensor that, after depolarization, moves from down (expanded state) to up (contracted) conformation, which is accompanied by an eccentric contraction of the intermembrane cross-sectional area of the protein as well as a major increase in the hydrophobic thickness of the protein having as consequences the plasma membrane thickening and the cell contraction after membrane depolarization. The anion-binding pocket transits from the inward-open (Down) state, where it is exposed toward the intracellular solvent in the absence of anion, to the occluded (Up) state upon anion binding. Salicylate competes for the anion-binding site and inhibits the voltage-sensor movement, and therefore inhibits the charge transfer and electromotility by displacing Cl(-) from the anion-binding site and by preventing the structural transitions to the contracted state. In addition, can act as a weak Cl(-)/HCO3(-) antiporter across the cell membrane and so regulate the intracellular pH of the outer hair cells (OHCs), while firstly found as being unable to mediate electrogenic anion transport. Moreover, supports a role in cardiac mechanical amplification serving as an elastic element to enhance the actomyosin- based sarcomere contraction system. This is Prestin from Rattus norvegicus (Rat).